The primary structure comprises 201 residues: Glycerol-3-phosphate acyltransferase (201 aa).

5 consecutive transmembrane segments (helical) span residues 10 to 30, 60 to 80, 86 to 106, 116 to 136, and 166 to 186; these read MLIG…GLIL, LAAA…LIAA, AAIA…WIGF, LGVL…AWIV, and ALAA…RANI.

The protein belongs to the PlsY family. Probably interacts with PlsX.

Its subcellular location is the cell inner membrane. The catalysed reaction is an acyl phosphate + sn-glycerol 3-phosphate = a 1-acyl-sn-glycero-3-phosphate + phosphate. It functions in the pathway lipid metabolism; phospholipid metabolism. In terms of biological role, catalyzes the transfer of an acyl group from acyl-phosphate (acyl-PO(4)) to glycerol-3-phosphate (G3P) to form lysophosphatidic acid (LPA). This enzyme utilizes acyl-phosphate as fatty acyl donor, but not acyl-CoA or acyl-ACP. The protein is Glycerol-3-phosphate acyltransferase of Brucella canis (strain ATCC 23365 / NCTC 10854 / RM-666).